We begin with the raw amino-acid sequence, 238 residues long: Dolichyldiphosphatase 1 (238 aa).

Transmembrane regions (helical) follow at residues 33-53 (LAYL…LIIF), 100-120 (PSSH…FLYL), 130-150 (FLDL…AFLV), and 162-182 (WSQV…WFIF).

Belongs to the dolichyldiphosphatase family.

It is found in the endoplasmic reticulum membrane. The enzyme catalyses a di-trans,poly-cis-dolichyl diphosphate + H2O = a di-trans,poly-cis-dolichyl phosphate + phosphate + H(+). The protein operates within protein modification; protein glycosylation. Functionally, required for efficient N-glycosylation. Necessary for maintaining optimal levels of dolichol-linked oligosaccharides. Hydrolyzes dolichyl pyrophosphate at a very high rate and dolichyl monophosphate at a much lower rate. Does not act on phosphatidate. The protein is Dolichyldiphosphatase 1 (DOLPP1) of Callithrix jacchus (White-tufted-ear marmoset).